The following is a 124-amino-acid chain: Ribosome-binding factor A (124 aa).

The protein belongs to the RbfA family. In terms of assembly, monomer. Binds 30S ribosomal subunits, but not 50S ribosomal subunits or 70S ribosomes.

It localises to the cytoplasm. Its function is as follows. One of several proteins that assist in the late maturation steps of the functional core of the 30S ribosomal subunit. Associates with free 30S ribosomal subunits (but not with 30S subunits that are part of 70S ribosomes or polysomes). Required for efficient processing of 16S rRNA. May interact with the 5'-terminal helix region of 16S rRNA. This is Ribosome-binding factor A from Sorangium cellulosum (strain So ce56) (Polyangium cellulosum (strain So ce56)).